Consider the following 509-residue polypeptide: Coiled-coil domain-containing protein 181 (509 aa).

The span at 46 to 82 (ENINQDLKENETVMEHTKRHSDPDKSLQDEVSPRRND) shows a compositional bias: basic and acidic residues. Disordered stretches follow at residues 46 to 120 (ENIN…EEED) and 241 to 367 (PINN…EEKE). Composition is skewed to polar residues over residues 243–266 (NNAN…SVSG) and 300–334 (TCPS…STYC). Positions 335-375 (LSPRQKELQKQLEEKREKLKREEERRKIEEEKEKKRENDIV) form a coiled coil. Residues 338 to 367 (RQKELQKQLEEKREKLKREEERRKIEEEKE) are compositionally biased toward basic and acidic residues.

This sequence belongs to the CCDC181 family. In terms of assembly, homodimer. Interacts with HOOK1. Interacts with HOOK2. Interacts with HOOK3.

The protein resides in the cytoplasm. It localises to the cytoskeleton. Its subcellular location is the cell projection. It is found in the cilium. The protein localises to the flagellum. Microtubule-binding protein that localizes to the microtubular manchette of elongating spermatids. This chain is Coiled-coil domain-containing protein 181, found in Homo sapiens (Human).